Consider the following 36-residue polypeptide: MTASYLPSIFVPLVGLVFPAITMASLFIYIEQDEIV.

A helical membrane pass occupies residues 7 to 29 (PSIFVPLVGLVFPAITMASLFIY).

The protein belongs to the PsaI family.

It is found in the plastid. It localises to the chloroplast thylakoid membrane. May help in the organization of the PsaL subunit. The sequence is that of Photosystem I reaction center subunit VIII from Psilotum nudum (Whisk fern).